The chain runs to 266 residues: Tryptophan synthase alpha chain (266 aa).

Active-site proton acceptor residues include Glu49 and Asp60.

The protein belongs to the TrpA family. In terms of assembly, tetramer of two alpha and two beta chains.

The enzyme catalyses (1S,2R)-1-C-(indol-3-yl)glycerol 3-phosphate + L-serine = D-glyceraldehyde 3-phosphate + L-tryptophan + H2O. It functions in the pathway amino-acid biosynthesis; L-tryptophan biosynthesis; L-tryptophan from chorismate: step 5/5. In terms of biological role, the alpha subunit is responsible for the aldol cleavage of indoleglycerol phosphate to indole and glyceraldehyde 3-phosphate. This chain is Tryptophan synthase alpha chain, found in Shewanella amazonensis (strain ATCC BAA-1098 / SB2B).